Reading from the N-terminus, the 436-residue chain is Putative permease MJ0326 (436 aa).

Transmembrane regions (helical) follow at residues 24 to 44 (LAGI…PQIL), 51 to 71 (FGAV…VMGL), 79 to 99 (LAPG…GMGI), 103 to 123 (VALG…LTKI), 139 to 159 (TAVG…GIIV), 171 to 191 (LMEP…ILVS), 194 to 214 (VIGA…ILGI), 235 to 255 (LDIM…FFFV), 322 to 342 (GFVS…YPVV), 345 to 365 (IPPY…MRSV), 381 to 401 (ITLL…LGFI), and 416 to 436 (VHWL…YLSG).

Belongs to the nucleobase:cation symporter-2 (NCS2) (TC 2.A.40) family. Azg-like subfamily.

It is found in the cell membrane. This Methanocaldococcus jannaschii (strain ATCC 43067 / DSM 2661 / JAL-1 / JCM 10045 / NBRC 100440) (Methanococcus jannaschii) protein is Putative permease MJ0326.